The sequence spans 428 residues: E3 ubiquitin-protein ligase RNF128 (428 aa).

Residues 1–38 (MGPPLGAGVSCRGGCGSSRLLAWCFLLALSPQAPGSRG) form the signal peptide. Residues asparagine 48, asparagine 59, and asparagine 101 are each glycosylated (N-linked (GlcNAc...) asparagine). A PA domain is found at 75–183 (SPLEPVAGVL…LKGTKILQSI (109 aa)). A helical membrane pass occupies residues 208-228 (IFFVSVSFFIITAATVGYFIF). The segment at 277 to 318 (CAVCIELYKPNDLVRILTCNHIFHKTCVDPWLLEHRTCPMCK) adopts an RING-type; atypical zinc-finger fold. Residues 346–428 (ISNSASSHEE…QETAVREIKS (83 aa)) form a disordered region. Residues 416–428 (TPHQETAVREIKS) are compositionally biased toward basic and acidic residues.

In terms of processing, auto-ubiquitinated. Controls the development of T-cell clonal anergy by ubiquitination.

It localises to the cytoplasm. It is found in the endomembrane system. The protein resides in the cytoskeleton. The protein localises to the perinuclear region. The enzyme catalyses S-ubiquitinyl-[E2 ubiquitin-conjugating enzyme]-L-cysteine + [acceptor protein]-L-lysine = [E2 ubiquitin-conjugating enzyme]-L-cysteine + N(6)-ubiquitinyl-[acceptor protein]-L-lysine.. The protein operates within protein modification; protein ubiquitination. In terms of biological role, E3 ubiquitin-protein ligase that catalyzes 'Lys-27', 'Lys-48'- or 'Lys-63'-linked polyubiquitin chains formation and plays a role in different biological processes such as modulation of immune response, cytoskeletal dynamics or protein homeostasis. Inhibits IL2 and IL4 transcription, thereby playing an important role in the induction of the anergic phenotype, a long-term stable state of T-lymphocyte unresponsiveness to antigenic stimulation associated with the blockade of interleukin production. Ubiquitinates ARPC5 with 'Lys-48' linkages and COR1A with 'Lys-63' linkages leading to their degradation, down-regulation of these cytoskeletal components results in impaired lamellipodium formation and reduced accumulation of F-actin at the immunological synapse. Functions in the patterning of the dorsal ectoderm; sensitizes ectoderm to respond to neural-inducing signals. Plays a positive role in innate immune response by promoting 'Lys-63'-linked ubiquitination of TBK1 after RNA- or DNA-virus infection. Regulates alveolar macrophage activation and neutrophil infiltration by interacting with TLR4, targeting it for degradation, and inhibiting NF-kappa-B activation, hence decreasing pro-inflammatory cytokines. Negatively regulates the IL-3/STAT5 signaling pathway by facilitating 'Lys-27'-linked polyubiquitination of IL3RA leading to its degradation via lysosomal pathway. Directly regulates the N-glycosylation process in the endoplasmic reticulum by targeting the glycosyl-transferase RPN1 for ubiquitination and degradation. Other substrates targeted for degradation by RNF128 include transmembrane proteins CD40L, CD83 or the tetraspanin CD151. The chain is E3 ubiquitin-protein ligase RNF128 (RNF128) from Pongo abelii (Sumatran orangutan).